Consider the following 167-residue polypeptide: Ribosome rescue factor SmrB (167 aa).

Residues 91–166 form the Smr domain; that stretch reads LDLHGLTREQ…GEAAILILVD (76 aa).

It belongs to the SmrB family. In terms of assembly, associates with collided ribosomes, but not with correctly translating polysomes.

Acts as a ribosome collision sensor. Detects stalled/collided disomes (pairs of ribosomes where the leading ribosome is stalled and a second ribosome has collided with it) and endonucleolytically cleaves mRNA at the 5' boundary of the stalled ribosome. Stalled/collided disomes form a new interface (primarily via the 30S subunits) that binds SmrB. Cleaved mRNA becomes available for tmRNA ligation, leading to ribosomal subunit dissociation and rescue of stalled ribosomes. This chain is Ribosome rescue factor SmrB, found in Haemophilus influenzae (strain ATCC 51907 / DSM 11121 / KW20 / Rd).